Reading from the N-terminus, the 1227-residue chain is Protein transport protein Sec31A (1227 aa).

WD repeat units lie at residues 4-47, 64-111, 120-160, 166-206, 209-254, 258-298, and 301-342; these read KEID…EIFE, SSAH…AGDT, KHTG…TPMT, QPLE…PIIK, DHNN…SPLR, SHTR…VLYE, and TNMQ…DGLR. A WD 8; interaction with SEC13 repeat occupies 397–430; that stretch reads SFSFGGKLVTFENAKPQQQPGIDQQPQHHYVYVS. Disordered stretches follow at residues 804–875, 905–1008, and 1040–1075; these read EAIK…YSQA, QPVA…GWND, and ADPQ…LGPY. Positions 905–924 are enriched in low complexity; that stretch reads QPVAAPASASYPSPASNTNP. The span at 925-945 shows a compositional bias: pro residues; the sequence is PYLPAAQPVPSPLYPGQPQPS. The segment covering 995 to 1006 has biased composition (polar residues); that stretch reads PASQRTGPQNGW. Residues 1040–1049 are compositionally biased toward low complexity; it reads ADPQAQMQQP. Residues 1057–1069 are compositionally biased toward polar residues; sequence PSFQPQQLSTGQQ.

The protein belongs to the WD repeat SEC31 family. As to quaternary structure, COPII is composed of at least 5 proteins: the SEC23/24 complex, the SEC13/31 complex and SAR1. SEC13 and SEC31 make a 2:2 tetramer that forms the edge element of the COPII outer coat. The tetramer self-assembles in multiple copies to form the complete polyhedral cage. Interacts (via WD 8) with SEC13.

Its subcellular location is the cytoplasm. The protein localises to the cytoplasmic vesicle. It localises to the COPII-coated vesicle membrane. It is found in the endoplasmic reticulum membrane. Its function is as follows. Component of the coat protein complex II (COPII) which promotes the formation of transport vesicles from the endoplasmic reticulum (ER). The coat has two main functions, the physical deformation of the endoplasmic reticulum membrane into vesicles and the selection of cargo molecules. This is Protein transport protein Sec31A (SEC31A) from Gallus gallus (Chicken).